The chain runs to 453 residues: Serine incorporator 1 (453 aa).

The N-myristoyl glycine moiety is linked to residue Gly2. Over Gly2–Arg39 the chain is Cytoplasmic. Residues Leu40–Gly60 traverse the membrane as a helical segment. Topologically, residues Met61–Lys88 are lumenal. Residues Ala89–Ile109 form a helical membrane-spanning segment. Residues Lys110 to Asn123 are Cytoplasmic-facing. A helical transmembrane segment spans residues Gly124–Pro144. Residues Glu145–Val151 are Lumenal-facing. Residues Trp152–Ile172 traverse the membrane as a helical segment. The Cytoplasmic segment spans residues Asp173–Ala197. Residues Leu198–Val218 form a helical membrane-spanning segment. Topologically, residues Tyr219 to Ala231 are lumenal. Residues Phe232–Ile252 form a helical membrane-spanning segment. The Cytoplasmic portion of the chain corresponds to Gln253–Ser259. Residues Gly260 to Thr280 traverse the membrane as a helical segment. The Lumenal segment spans residues Asn281–Ser309. Residues Val310–Tyr330 traverse the membrane as a helical segment. At Ser331–Ser387 the chain is on the cytoplasmic side. Residue Ser351 is modified to Phosphoserine. The residue at position 352 (Thr352) is a Phosphothreonine. Phosphoserine is present on residues Ser361 and Ser364. Residues Phe388–Tyr408 form a helical membrane-spanning segment. Residues Arg409–Lys426 are Lumenal-facing. The chain crosses the membrane as a helical span at residues Ile427–Leu447. The Cytoplasmic portion of the chain corresponds to Thr448–Asp453.

It belongs to the TDE1 family. In terms of assembly, interacts with SPTLC1. Highly expressed in the neuronal populations such as Purkinje cells in the cerebellum, brainstem and spinal motor neurons, locus coeruleus and raphe nuclei.

The protein localises to the endoplasmic reticulum membrane. Its function is as follows. Enhances the incorporation of serine into phosphatidylserine and sphingolipids. This chain is Serine incorporator 1 (Serinc1), found in Mus musculus (Mouse).